Here is a 147-residue protein sequence, read N- to C-terminus: Protein SprT-like (147 aa).

A SprT-like domain is found at 9–142 (AKVKEISLTY…CGKCRGKLIL (134 aa)). Zn(2+) is bound at residue His65. Glu66 is an active-site residue. His69 contacts Zn(2+).

The protein belongs to the SprT family. Zn(2+) serves as cofactor.

It is found in the cytoplasm. In Lactococcus lactis subsp. lactis (strain IL1403) (Streptococcus lactis), this protein is Protein SprT-like (yciD).